Reading from the N-terminus, the 908-residue chain is Bifunctional uridylyltransferase/uridylyl-removing enzyme (908 aa).

The uridylyltransferase stretch occupies residues 1–360 (MFDTPAVFAR…LERIFRRRRR (360 aa)). The tract at residues 361–718 (IKQGYKVVRG…LDPDEDRDAT (358 aa)) is uridylyl-removing. In terms of domain architecture, HD spans 477–599 (VDEHTIQTIV…VQTTKRLDLL (123 aa)). ACT domains are found at residues 719–801 (RACF…LKSR) and 829–904 (IIEV…GAER).

The protein belongs to the GlnD family. Requires Mg(2+) as cofactor.

The catalysed reaction is [protein-PII]-L-tyrosine + UTP = [protein-PII]-uridylyl-L-tyrosine + diphosphate. It carries out the reaction [protein-PII]-uridylyl-L-tyrosine + H2O = [protein-PII]-L-tyrosine + UMP + H(+). Uridylyltransferase (UTase) activity is inhibited by glutamine, while glutamine activates uridylyl-removing (UR) activity. Modifies, by uridylylation and deuridylylation, the PII regulatory proteins (GlnB and homologs), in response to the nitrogen status of the cell that GlnD senses through the glutamine level. Under low glutamine levels, catalyzes the conversion of the PII proteins and UTP to PII-UMP and PPi, while under higher glutamine levels, GlnD hydrolyzes PII-UMP to PII and UMP (deuridylylation). Thus, controls uridylylation state and activity of the PII proteins, and plays an important role in the regulation of nitrogen assimilation and metabolism. This is Bifunctional uridylyltransferase/uridylyl-removing enzyme from Ruegeria pomeroyi (strain ATCC 700808 / DSM 15171 / DSS-3) (Silicibacter pomeroyi).